A 139-amino-acid chain; its full sequence is Cuticle protein 6 (139 aa).

The residue at position 1 (Q1) is a Pyrrolidone carboxylic acid. The Chitin-binding type R&amp;R domain occupies 31-92 (LGQFAFHHAG…VGANNLPEAP (62 aa)).

This chain is Cuticle protein 6, found in Blaberus craniifer (Death's head cockroach).